The chain runs to 513 residues: Zinc finger CCCH-type with G patch domain-containing protein (513 aa).

An N-acetylmethionine modification is found at methionine 1. Positions 90 to 131 (EVPVAPGAELETVPSRETGPGPTERGQEEDDGEDEEGGAALS) are disordered. The span at 116-126 (QEEDDGEDEEG) shows a compositional bias: acidic residues. Residues 176-202 (KSLKPCSFFLEGKCRFQENCRFSHGQV) form a C3H1-type zinc finger. The segment at 267 to 296 (LPPLRTEPAGSSDSDGSDADDPSYARVVEP) is disordered. Residues serine 278 and serine 355 each carry the phosphoserine modification. The G-patch domain maps to 315 to 361 (TRGIGSRLLAKMGYEFGKGLGRHAEGRVEPVHAVVLPRGKSLDQCAE). 2 disordered regions span residues 367-394 (TRAG…PPPR) and 492-513 (AQEA…MTEF). The segment covering 497–513 (LQREQRKADTHKKMTEF) has biased composition (basic and acidic residues).

Interacts with CHD4/Mi-2; the interaction is direct.

The protein localises to the nucleus. Transcription repressor that specifically binds the 5'-GGAG[GA]A[GA]A-3' consensus sequence. Represses transcription by recruiting the chromatin multiprotein complex NuRD to target promoters. Negatively regulates expression of EGFR, a gene involved in cell proliferation, survival and migration. Its ability to repress genes of the EGFR pathway suggest it may act as a tumor suppressor. This is Zinc finger CCCH-type with G patch domain-containing protein (ZGPAT) from Bos taurus (Bovine).